We begin with the raw amino-acid sequence, 368 residues long: MKVFAIAAVAALTAVAVAGPVRPSGDKYLIELGPGKTQWVTKDQKHKMRAAGQTFIDITNEIGTNFVATKPVAANYPKNIAHSSMVSSMIANLSKENLMRDLQAMSEFNNRYYESQTGVESANWLMEQVKKVIDESGAQGAKVEKIDNQFNQFNIIATIPGSSESTVIVGAHQDSINQEDPMGGRAPGADDNGSGSVVVLEALRGVLGSKAFRAANNTNTLEFHWYAGEEGGLLGSQTVFSKYKSDGRQVKAMLNQDLAGFKGQGQEQFGLITDNTNQELNQFCKMIVEKYASIPIVDTECGYACSDHASADRNGFPASMVAETAFEDSNPHIHSADDTVEYLDFDHMLEHAKVALGFMTELGMASNL.

The N-terminal stretch at 1-18 (MKVFAIAAVAALTAVAVA) is a signal peptide. N92 carries N-linked (GlcNAc...) asparagine glycosylation. The Zn(2+) site is built by H172 and D191. Residues N192 and N216 are each glycosylated (N-linked (GlcNAc...) asparagine). 2 residues coordinate Zn(2+): E230 and D257. An intrachain disulfide couples C301 to C305. H334 contributes to the Zn(2+) binding site.

This sequence belongs to the peptidase M28 family. M28E subfamily. In terms of assembly, monomer. Zn(2+) is required as a cofactor.

It is found in the secreted. Functionally, probable extracellular aminopeptidase which contributes to pathogenicity. The sequence is that of Probable leucine aminopeptidase TRV_05750 from Trichophyton verrucosum (strain HKI 0517).